Here is a 407-residue protein sequence, read N- to C-terminus: 1-deoxy-D-xylulose 5-phosphate reductoisomerase (407 aa).

NADPH-binding residues include T25, G26, S27, I28, N53, and N136. Residue K137 participates in 1-deoxy-D-xylulose 5-phosphate binding. Residue E138 coordinates NADPH. A Mn(2+)-binding site is contributed by D162. Residues S163, E164, S188, and H211 each contribute to the 1-deoxy-D-xylulose 5-phosphate site. E164 contributes to the Mn(2+) binding site. G217 contributes to the NADPH binding site. The 1-deoxy-D-xylulose 5-phosphate site is built by S224, N229, K230, and E233. A Mn(2+)-binding site is contributed by E233.

It belongs to the DXR family. Requires Mg(2+) as cofactor. It depends on Mn(2+) as a cofactor.

The catalysed reaction is 2-C-methyl-D-erythritol 4-phosphate + NADP(+) = 1-deoxy-D-xylulose 5-phosphate + NADPH + H(+). It functions in the pathway isoprenoid biosynthesis; isopentenyl diphosphate biosynthesis via DXP pathway; isopentenyl diphosphate from 1-deoxy-D-xylulose 5-phosphate: step 1/6. Catalyzes the NADPH-dependent rearrangement and reduction of 1-deoxy-D-xylulose-5-phosphate (DXP) to 2-C-methyl-D-erythritol 4-phosphate (MEP). The chain is 1-deoxy-D-xylulose 5-phosphate reductoisomerase from Bradyrhizobium diazoefficiens (strain JCM 10833 / BCRC 13528 / IAM 13628 / NBRC 14792 / USDA 110).